We begin with the raw amino-acid sequence, 99 residues long: Small ribosomal subunit protein bS18 (99 aa).

Positions 1–25 (MAEDHPSVDLDTHLSSPRESEESAP) are enriched in basic and acidic residues. The interval 1-28 (MAEDHPSVDLDTHLSSPRESEESAPKKN) is disordered.

The protein belongs to the bacterial ribosomal protein bS18 family. As to quaternary structure, part of the 30S ribosomal subunit. Forms a tight heterodimer with protein bS6.

In terms of biological role, binds as a heterodimer with protein bS6 to the central domain of the 16S rRNA, where it helps stabilize the platform of the 30S subunit. This is Small ribosomal subunit protein bS18 from Treponema pallidum (strain Nichols).